The sequence spans 245 residues: 1-(5-phosphoribosyl)-5-[(5-phosphoribosylamino)methylideneamino] imidazole-4-carboxamide isomerase (245 aa).

The active-site Proton acceptor is the D7. D129 serves as the catalytic Proton donor.

Belongs to the HisA/HisF family.

It is found in the cytoplasm. The enzyme catalyses 1-(5-phospho-beta-D-ribosyl)-5-[(5-phospho-beta-D-ribosylamino)methylideneamino]imidazole-4-carboxamide = 5-[(5-phospho-1-deoxy-D-ribulos-1-ylimino)methylamino]-1-(5-phospho-beta-D-ribosyl)imidazole-4-carboxamide. The protein operates within amino-acid biosynthesis; L-histidine biosynthesis; L-histidine from 5-phospho-alpha-D-ribose 1-diphosphate: step 4/9. This Cronobacter sakazakii (strain ATCC BAA-894) (Enterobacter sakazakii) protein is 1-(5-phosphoribosyl)-5-[(5-phosphoribosylamino)methylideneamino] imidazole-4-carboxamide isomerase.